The primary structure comprises 266 residues: uncharacterized protein (266 aa).

A helical membrane pass occupies residues 12–28 (ILAAGLAIGCAGGYYAY). The 101-residue stretch at 40–140 (EIYAPFTVNK…RGPFKTTKLD (101 aa)) folds into the FAD-binding FR-type domain.

The protein belongs to the flavoprotein pyridine nucleotide cytochrome reductase family. The cofactor is FAD.

It localises to the mitochondrion outer membrane. This is an uncharacterized protein from Schizosaccharomyces pombe (strain 972 / ATCC 24843) (Fission yeast).